The chain runs to 478 residues: Ribosomal RNA small subunit methyltransferase F (478 aa).

S-adenosyl-L-methionine-binding positions include 123-129 (AAAPGSK), E147, D174, and D192. C245 acts as the Nucleophile in catalysis.

This sequence belongs to the class I-like SAM-binding methyltransferase superfamily. RsmB/NOP family.

The protein resides in the cytoplasm. The catalysed reaction is cytidine(1407) in 16S rRNA + S-adenosyl-L-methionine = 5-methylcytidine(1407) in 16S rRNA + S-adenosyl-L-homocysteine + H(+). Its function is as follows. Specifically methylates the cytosine at position 1407 (m5C1407) of 16S rRNA. The polypeptide is Ribosomal RNA small subunit methyltransferase F (Vibrio parahaemolyticus serotype O3:K6 (strain RIMD 2210633)).